We begin with the raw amino-acid sequence, 468 residues long: Pancreatic lipase-related protein 2 (468 aa).

The signal sequence occupies residues 1–16 (MLLCWIVSLLLATVGG). Cysteines 20 and 26 form a disulfide. The required for galactolipase activity stretch occupies residues 92–104 (VHGFIDKGEDGWL). The cysteines at positions 108 and 119 are disulfide-linked. The active-site Nucleophile is the S170. D194 acts as the Charge relay system in catalysis. Ca(2+)-binding residues include E205, R208, D210, and D213. The cysteines at positions 255 and 279 are disulfide-linked. The interval 256–278 (QKNILSTIVDINGIWEGTQNFVA) is required for galactolipase activity. The active-site Charge relay system is H281. Intrachain disulfides connect C303–C314 and C317–C322. N352 and N427 each carry an N-linked (GlcNAc...) asparagine glycan. One can recognise a PLAT domain in the interval 356 to 468 (WRYKVSVTLS…EDVLQSLYPC (113 aa)). A disulfide bridge links C452 with C468.

This sequence belongs to the AB hydrolase superfamily. Lipase family. As to expression, expressed in pancreatic acinar cells (at protein level).

The protein localises to the secreted. It is found in the zymogen granule membrane. It localises to the cell projection. The protein resides in the neuron projection. It catalyses the reaction a triacylglycerol + H2O = a diacylglycerol + a fatty acid + H(+). The catalysed reaction is a 1,2-diacyl-3-O-(beta-D-galactosyl)-sn-glycerol + 2 H2O = 3-beta-D-galactosyl-sn-glycerol + 2 a fatty acid + 2 H(+). It carries out the reaction 1,2,3-tri-(9Z-octadecenoyl)-glycerol + H2O = di-(9Z)-octadecenoylglycerol + (9Z)-octadecenoate + H(+). The enzyme catalyses di-(9Z)-octadecenoylglycerol + H2O = (9Z-octadecenoyl)-glycerol + (9Z)-octadecenoate + H(+). It catalyses the reaction (9Z-octadecenoyl)-glycerol + H2O = glycerol + (9Z)-octadecenoate + H(+). The catalysed reaction is 1-(9Z-octadecenoyl)-glycerol + H2O = glycerol + (9Z)-octadecenoate + H(+). It carries out the reaction 1,2,3-tripropanoylglycerol + H2O = dipropanoylglycerol + propanoate + H(+). The enzyme catalyses 1,2,3-tributanoylglycerol + H2O = dibutanoylglycerol + butanoate + H(+). It catalyses the reaction 1,2,3-trioctanoylglycerol + H2O = dioctanoylglycerol + octanoate + H(+). The catalysed reaction is 1,2-didecanoylglycerol + H2O = decanoylglycerol + decanoate + H(+). It carries out the reaction long chain 1,2-diacyl-3-O-beta-D-galactosyl-sn-glycerol + H2O = long chain acyl-3-O-beta-D-galactosyl-sn-glycerol + a fatty acid + H(+). The enzyme catalyses 1,2-dioctanoyl-3-O-beta-D-galactosyl-sn-glycerol + H2O = octanoyl-3-(beta-D-galactosyl)-sn-glycerol + octanoate + H(+). It catalyses the reaction 1,2-didodecanoyl-3-beta-D-galactosyl-sn-glycerol + H2O = dodecanoyl-3-beta-D-galactosyl-sn-glycerol + dodecanoate + H(+). The catalysed reaction is 1-beta-D-galactosyl-2,3-didodecanoyl-sn-glycerol + H2O = 1-beta-D-galactosyl-dodecanoyl-sn-glycerol + dodecanoate + H(+). It carries out the reaction a 1,2-diacyl-3-O-[alpha-D-galactosyl-(1-&gt;6)-beta-D-galactosyl]-sn-glycerol + H2O = acyl-3-O-[alpha-D-galactosyl-(1-&gt;6)-beta-D-galactosyl]-sn-glycerol + a fatty acid + H(+). The enzyme catalyses long chain 1,2-diacyl-3-O-[alpha-D-galactosyl-(1-&gt;6)-beta-D-galactosyl]-sn-glycerol + H2O = long chain acyl-3-O-[alpha-D-galactosyl-(1-&gt;6)-beta-D-galactosyl]-sn-glycerol + a fatty acid + H(+). It catalyses the reaction 1,2-dioctanoyl-3-O-[alpha-D-galactosyl-(1-&gt;6)-beta-D-galactosyl]-sn-glycerol + H2O = octanoyl-3-O-[alpha-D-galactosyl-(1-&gt;6)-beta-D-galactosyl]-sn-glycerol + octanoate + H(+). The catalysed reaction is 1,2-didodecanoyl-3-O-[alpha-D-galactosyl-(1-&gt;6)-beta-D-galactosyl]-sn-glycerol + H2O = dodecanoyl-3-O-[alpha-D-galactosyl-(1-&gt;6)-beta-D-galactosyl]-sn-glycerol + dodecanoate + H(+). It carries out the reaction a 1,2-diacyl-sn-glycero-3-phosphocholine + H2O = a monoacyl-sn-glycero-3-phosphocholine + a fatty acid + H(+). The protein operates within glycerolipid metabolism; triacylglycerol degradation. It participates in glycolipid metabolism. Its activity is regulated as follows. CLPS stimulates triacylglycerol lipase activity. Triacylglycerol lipase activity is not inhibited by increasing bile salt concentration. Its function is as follows. Lipase that primarily hydrolyzes triglycerides and galactosylglycerides. In neonates, may play a major role in pancreatic digestion of dietary fats such as milk fat globules enriched in long-chain triglycerides. Hydrolyzes short-, medium- and long-chain fatty acyls in triglycerides without apparent positional specificity. Can completely deacylate triacylglycerols. When the liver matures and bile salt synthesis increases, likely functions mainly as a galactolipase and monoacylglycerol lipase. Hydrolyzes monogalactosyldiglycerols (MGDG) and digalactosyldiacylglycerols (DGDG) present in a plant-based diet, releasing long-chain polyunsaturated fatty acids. Hydrolyzes medium- and long-chain fatty acyls in galactolipids. May act together with LIPF to hydrolyze partially digested triglycerides. Hydrolyzes long-chain monoglycerides with high efficiency. In cytotoxic T cells, contributes to perforin-dependent cell lysis, but is unlikely to mediate direct cytotoxicity. Also has low phospholipase activity. In neurons, required for the localization of the phospholipid 1-oleoyl-2-palmitoyl-PC (OPPC) to neurite tips through acyl chain remodeling of membrane phospholipids. The resulting OPPC-rich lipid membrane domain recruits the t-SNARE protein STX4 by selectively interacting with the STX4 transmembrane domain and this promotes surface expression of the dopamine transporter SLC6A3/DAT at neurite tips by facilitating fusion of SLC6A3-containing transport vesicles with the plasma membrane. This chain is Pancreatic lipase-related protein 2, found in Rattus norvegicus (Rat).